We begin with the raw amino-acid sequence, 111 residues long: Mitochondrial import inner membrane translocase subunit Tim10B (111 aa).

Residues 24 to 48 (CFNACARDYTTSTLTKDEGSCVSQC) carry the Twin CX3C motif motif. 2 cysteine pairs are disulfide-bonded: Cys24/Cys48 and Cys28/Cys44. The disordered stretch occupies residues 73 to 111 (KQGEQSPTEAIKSAKPEPAVPAPEATPVETTPVIEENKQ). The span at 94-105 (APEATPVETTPV) shows a compositional bias: low complexity.

Belongs to the small Tim family. As to quaternary structure, component of the TIM22 complex, whose core is composed of tim-22, associated with peripheral protein tin-9.2/tim-10b and the 70 kDa heterohexamer. In most cases, the 70 kDa complex is composed of TIMM9 and TIMM10.

The protein resides in the mitochondrion inner membrane. Its function is as follows. Component of the TIM22 complex, a complex that mediates the import and insertion of multi-pass transmembrane proteins into the mitochondrial inner membrane. The TIM22 complex forms a twin-pore translocase that uses the membrane potential as the external driving force. In the TIM22 complex, it may act as a docking point for the soluble 70 kDa complex that guides the target proteins in transit through the aqueous mitochondrial intermembrane space. This Caenorhabditis elegans protein is Mitochondrial import inner membrane translocase subunit Tim10B (tin-9.2).